The following is an 81-amino-acid chain: MSVKIRLQRFGKHKKPFYRVVAINSKNSRDGKFLEILGTYEPLLGNINLNTKNIEKWLFYGAVPTLTVKNLINKQNKNNKS.

It belongs to the bacterial ribosomal protein bS16 family.

The sequence is that of Small ribosomal subunit protein bS16 from Phytoplasma mali (strain AT).